The chain runs to 289 residues: MALAPTMKALTFSADDETSLEKAVTEALSGSVDLNMGLRRCAAFPAENTGAFLCELTTKETKSFIGKFSDKVRGRVFIDHAVIHMMYIPVILNTTHAIAELKLKNLATGDELYGGTKVNLNKAFILTMTWPRSLFAEAVHNHKGLYLGGTVSCASSVPAHAKIGMWYPIWSEKVSIKQLYQNTIDIHKTEAIETFTPTMISSDKEMRSLLRSRASIDVAAKTREKPVICSERVSLLDQHTQGVDFTVTEIEPEKDDDAGTSILGPKMVPIEQVPSVKLSSEAGRNLLTA.

It belongs to the ilarvirus movement protein family.

It is found in the host cell junction. The protein resides in the host plasmodesma. Its function is as follows. Transports viral genome to neighboring plant cells directly through plasmosdesmata, without any budding. The movement protein allows efficient cell to cell propagation, by bypassing the host cell wall barrier. Acts by forming a tubular structure at the host plasmodesmata, enlarging it enough to allow free passage of virion capsids. The chain is Movement protein from Tobacco streak virus (strain WC) (TSV).